Here is a 179-residue protein sequence, read N- to C-terminus: Large ribosomal subunit protein uL5 (179 aa).

It belongs to the universal ribosomal protein uL5 family. As to quaternary structure, part of the 50S ribosomal subunit; part of the 5S rRNA/L5/L18/L25 subcomplex. Contacts the 5S rRNA and the P site tRNA. Forms a bridge to the 30S subunit in the 70S ribosome.

Its function is as follows. This is one of the proteins that bind and probably mediate the attachment of the 5S RNA into the large ribosomal subunit, where it forms part of the central protuberance. In the 70S ribosome it contacts protein S13 of the 30S subunit (bridge B1b), connecting the 2 subunits; this bridge is implicated in subunit movement. Contacts the P site tRNA; the 5S rRNA and some of its associated proteins might help stabilize positioning of ribosome-bound tRNAs. The polypeptide is Large ribosomal subunit protein uL5 (Idiomarina loihiensis (strain ATCC BAA-735 / DSM 15497 / L2-TR)).